We begin with the raw amino-acid sequence, 101 residues long: CRISPR-associated endoribonuclease Cas2 (101 aa).

Mg(2+) is bound at residue D17.

The protein belongs to the CRISPR-associated endoribonuclease Cas2 protein family. Homodimer, forms a heterotetramer with a Cas1 homodimer. Requires Mg(2+) as cofactor.

Functionally, CRISPR (clustered regularly interspaced short palindromic repeat), is an adaptive immune system that provides protection against mobile genetic elements (viruses, transposable elements and conjugative plasmids). CRISPR clusters contain sequences complementary to antecedent mobile elements and target invading nucleic acids. CRISPR clusters are transcribed and processed into CRISPR RNA (crRNA). Functions as a ssRNA-specific endoribonuclease. Involved in the integration of spacer DNA into the CRISPR cassette. This chain is CRISPR-associated endoribonuclease Cas2, found in Methanopyrus kandleri (strain AV19 / DSM 6324 / JCM 9639 / NBRC 100938).